The sequence spans 405 residues: Diaminohydroxyphosphoribosylamino-pyrimidine deaminase (405 aa).

The 128-residue stretch at 256–383 (YNHEEYMLKA…DLLKKAGIVV (128 aa)) folds into the CMP/dCMP-type deaminase domain. His-305 serves as a coordination point for Zn(2+). Glu-307 (proton donor) is an active-site residue. Cys-335 and Cys-345 together coordinate Zn(2+).

Belongs to the cytidine and deoxycytidylate deaminase family. It depends on Zn(2+) as a cofactor.

It localises to the cytoplasm. The protein resides in the nucleus. It carries out the reaction 2,5-diamino-6-hydroxy-4-(5-phosphoribosylamino)-pyrimidine + H2O + H(+) = 5-amino-6-(5-phospho-D-ribosylamino)uracil + NH4(+). The protein operates within cofactor biosynthesis; riboflavin biosynthesis; 5-amino-6-(D-ribitylamino)uracil from GTP: step 2/4. Its function is as follows. Involved in riboflavin biosynthesis. Converts 2,5-diamino-6-(ribosylamino)-4(3H)-pyrimidinone 5'-phosphate into 5-amino-6-(ribosylamino)-2,4(1H,3H)-pyrimidinedione 5'-phosphate. In Schizosaccharomyces pombe (strain 972 / ATCC 24843) (Fission yeast), this protein is Diaminohydroxyphosphoribosylamino-pyrimidine deaminase.